We begin with the raw amino-acid sequence, 543 residues long: CTP synthase (543 aa).

The tract at residues 1 to 265 (MTRFVFITGG…DQEVLRYFDL (265 aa)) is amidoligase domain. Ser13 is a CTP binding site. A UTP-binding site is contributed by Ser13. 14-19 (SLGKGI) lines the ATP pocket. Residue Tyr54 participates in L-glutamine binding. Asp71 serves as a coordination point for ATP. Mg(2+)-binding residues include Asp71 and Glu139. Residues 146–148 (DIE), 186–191 (KTKPTQ), and Lys222 each bind CTP. UTP is bound by residues 186 to 191 (KTKPTQ) and Lys222. The Glutamine amidotransferase type-1 domain maps to 291-542 (RVAIVGKYTA…IAAAVKEAHR (252 aa)). L-glutamine is bound at residue Gly354. Cys381 acts as the Nucleophile; for glutamine hydrolysis in catalysis. Residues 382 to 385 (FGMQ), Glu405, and Arg470 contribute to the L-glutamine site. Catalysis depends on residues His515 and Glu517.

Belongs to the CTP synthase family. As to quaternary structure, homotetramer.

The catalysed reaction is UTP + L-glutamine + ATP + H2O = CTP + L-glutamate + ADP + phosphate + 2 H(+). It catalyses the reaction L-glutamine + H2O = L-glutamate + NH4(+). The enzyme catalyses UTP + NH4(+) + ATP = CTP + ADP + phosphate + 2 H(+). Its pathway is pyrimidine metabolism; CTP biosynthesis via de novo pathway; CTP from UDP: step 2/2. Its activity is regulated as follows. Allosterically activated by GTP, when glutamine is the substrate; GTP has no effect on the reaction when ammonia is the substrate. The allosteric effector GTP functions by stabilizing the protein conformation that binds the tetrahedral intermediate(s) formed during glutamine hydrolysis. Inhibited by the product CTP, via allosteric rather than competitive inhibition. Functionally, catalyzes the ATP-dependent amination of UTP to CTP with either L-glutamine or ammonia as the source of nitrogen. Regulates intracellular CTP levels through interactions with the four ribonucleotide triphosphates. In Gluconobacter oxydans (strain 621H) (Gluconobacter suboxydans), this protein is CTP synthase.